The primary structure comprises 162 residues: Putative ethylene-responsive transcription factor ERF121 (162 aa).

Disordered regions lie at residues 1-21 (MDYS…PPNL), 84-103 (IKQE…KWSA), and 139-162 (KRSA…GGDD). Residues 87–98 (EKKHKGVRKKPS) show a composition bias toward basic residues. The segment at residues 89-146 (KHKGVRKKPSGKWSAEIWDPSTRTRRWLGTFPTAEMAADAYDEAAAALVEKRSARRGS) is a DNA-binding region (AP2/ERF).

This sequence belongs to the AP2/ERF transcription factor family. ERF subfamily.

It is found in the nucleus. Functionally, probably acts as a transcriptional activator. Binds to the GCC-box pathogenesis-related promoter element. May be involved in the regulation of gene expression by stress factors and by components of stress signal transduction pathways. The polypeptide is Putative ethylene-responsive transcription factor ERF121 (ERF121) (Arabidopsis thaliana (Mouse-ear cress)).